The sequence spans 504 residues: Anaerobic nitric oxide reductase transcription regulator NorR (504 aa).

Asp57 carries the post-translational modification 4-aspartylphosphate. A Sigma-54 factor interaction domain is found at 187–416; the sequence is MIGLSPGMTQ…LEHAIHRAVV (230 aa). ATP contacts are provided by residues 215-222 and 278-287; these read GETGTGKE and ADNGTLFLDE. Positions 479–498 form a DNA-binding region, H-T-H motif; that stretch reads WAASARMLETDVANLHRLAK.

It participates in nitrogen metabolism; nitric oxide reduction. Its function is as follows. Required for the expression of anaerobic nitric oxide (NO) reductase, acts as a transcriptional activator for at least the norVW operon. Activation also requires sigma-54. The protein is Anaerobic nitric oxide reductase transcription regulator NorR of Escherichia coli O7:K1 (strain IAI39 / ExPEC).